The chain runs to 238 residues: Leucyl/phenylalanyl-tRNA--protein transferase (238 aa).

This sequence belongs to the L/F-transferase family.

Its subcellular location is the cytoplasm. The catalysed reaction is N-terminal L-lysyl-[protein] + L-leucyl-tRNA(Leu) = N-terminal L-leucyl-L-lysyl-[protein] + tRNA(Leu) + H(+). The enzyme catalyses N-terminal L-arginyl-[protein] + L-leucyl-tRNA(Leu) = N-terminal L-leucyl-L-arginyl-[protein] + tRNA(Leu) + H(+). It carries out the reaction L-phenylalanyl-tRNA(Phe) + an N-terminal L-alpha-aminoacyl-[protein] = an N-terminal L-phenylalanyl-L-alpha-aminoacyl-[protein] + tRNA(Phe). Functionally, functions in the N-end rule pathway of protein degradation where it conjugates Leu, Phe and, less efficiently, Met from aminoacyl-tRNAs to the N-termini of proteins containing an N-terminal arginine or lysine. The protein is Leucyl/phenylalanyl-tRNA--protein transferase of Pseudoalteromonas translucida (strain TAC 125).